Reading from the N-terminus, the 361-residue chain is S-adenosylmethionine:tRNA ribosyltransferase-isomerase (361 aa).

The protein belongs to the QueA family. In terms of assembly, monomer.

It localises to the cytoplasm. The catalysed reaction is 7-aminomethyl-7-carbaguanosine(34) in tRNA + S-adenosyl-L-methionine = epoxyqueuosine(34) in tRNA + adenine + L-methionine + 2 H(+). Its pathway is tRNA modification; tRNA-queuosine biosynthesis. Transfers and isomerizes the ribose moiety from AdoMet to the 7-aminomethyl group of 7-deazaguanine (preQ1-tRNA) to give epoxyqueuosine (oQ-tRNA). The sequence is that of S-adenosylmethionine:tRNA ribosyltransferase-isomerase from Actinobacillus pleuropneumoniae serotype 3 (strain JL03).